We begin with the raw amino-acid sequence, 322 residues long: Crystallin J1B (322 aa).

It belongs to the ADP-ribosylglycohydrolase family. J1 crystallin subfamily. In terms of tissue distribution, expressed in the rhopalia. Present in both the large and small eyes.

The protein is Crystallin J1B of Tripedalia cystophora (Jellyfish).